Consider the following 530-residue polypeptide: Poly(U)-binding-splicing factor PUF60 (530 aa).

The inhibits homodimerization stretch occupies residues 1 to 487; sequence MATATIALGT…EDAEIIVKIF (487 aa). Residue lysine 14 forms a Glycyl lysine isopeptide (Lys-Gly) (interchain with G-Cter in SUMO2) linkage. A Phosphothreonine modification is found at threonine 31. Positions 48–530 are inhibits transcriptional repression, interaction with ERCC3 and apoptosis induction; sequence QSIKSVLVKQ…ERFDNSDLSA (483 aa). Lysine 51 is covalently cross-linked (Glycyl lysine isopeptide (Lys-Gly) (interchain with G-Cter in SUMO2)). A Phosphoserine modification is found at serine 83. 2 RRM domains span residues 100–178 and 197–275; these read CRVY…RPSN and NRIY…KAVT. At serine 215 the chain carries Phosphoserine. At lysine 222 the chain carries N6-acetyllysine. Position 285 is a phosphothreonine (threonine 285). The interval 387-408 is disordered; it reads KKEKEEEELFPESERPEMLSEQ. A Glycyl lysine isopeptide (Lys-Gly) (interchain with G-Cter in SUMO2) cross-link involves residue lysine 390. Positions 398-408 are enriched in basic and acidic residues; that stretch reads ESERPEMLSEQ. N6-acetyllysine is present on lysine 425. Lysine 429 participates in a covalent cross-link: Glycyl lysine isopeptide (Lys-Gly) (interchain with G-Cter in SUMO2). The region spanning 433–520 is the RRM 3; atypical domain; sequence TVMVLRNMVD…RKVVAEVYDQ (88 aa).

It belongs to the RRM half pint family. As to quaternary structure, homodimer. Associates with the spliceosome. Found in a complex with RO60 and Y5 RNA. Found in a complex with FUBP1 and far upstream element (FUSE) DNA segment. Interacts directly with ERCC3. Interacts with CDK7 and GTF2H1. Interacts with SRSF11/P54. Interacts with ARGLU1; interaction may be involved in ARGLU1-mediated modulation of alternative splicing.

The protein resides in the nucleus. Its function is as follows. DNA- and RNA-binding protein, involved in several nuclear processes such as pre-mRNA splicing, apoptosis and transcription regulation. In association with FUBP1 regulates MYC transcription at the P2 promoter through the core-TFIIH basal transcription factor. Acts as a transcriptional repressor through the core-TFIIH basal transcription factor. Represses FUBP1-induced transcriptional activation but not basal transcription. Decreases ERCC3 helicase activity. Is also involved in pre-mRNA splicing. Promotes splicing of an intron with weak 3'-splice site and pyrimidine tract in a cooperative manner with U2AF2. Involved in apoptosis induction when overexpressed in HeLa cells. Modulates alternative splicing of several mRNAs. Binds to relaxed DNA of active promoter regions. Binds to the pyrimidine tract and 3'-splice site regions of pre-mRNA; binding is enhanced in presence of U2AF2. Binds to Y5 RNA in association with RO60. Binds to poly(U) RNA. This chain is Poly(U)-binding-splicing factor PUF60, found in Bos taurus (Bovine).